Here is a 126-residue protein sequence, read N- to C-terminus: Fluoride-specific ion channel FluC (126 aa).

4 consecutive transmembrane segments (helical) span residues 4 to 24 (SILAIAIGAAAGALLRWFLGL), 36 to 56 (GTLAANLVGGYIIGVAVALFA), 68 to 88 (LIITGFCGGLTTFSTFSAEVV), and 99 to 119 (AFAAIAVHVSGSLLMTMAGIA). Residues Gly-75 and Thr-78 each contribute to the Na(+) site.

This sequence belongs to the fluoride channel Fluc/FEX (TC 1.A.43) family.

The protein resides in the cell inner membrane. The enzyme catalyses fluoride(in) = fluoride(out). With respect to regulation, na(+) is not transported, but it plays an essential structural role and its presence is essential for fluoride channel function. In terms of biological role, fluoride-specific ion channel. Important for reducing fluoride concentration in the cell, thus reducing its toxicity. The sequence is that of Fluoride-specific ion channel FluC from Chromobacterium violaceum (strain ATCC 12472 / DSM 30191 / JCM 1249 / CCUG 213 / NBRC 12614 / NCIMB 9131 / NCTC 9757 / MK).